The sequence spans 304 residues: UDP-N-acetylenolpyruvoylglucosamine reductase (304 aa).

The FAD-binding PCMH-type domain maps to 33–198 (RVGGPADILV…IEATVELESG (166 aa)). R177 is an active-site residue. S227 serves as the catalytic Proton donor. E297 is an active-site residue.

It belongs to the MurB family. FAD is required as a cofactor.

The protein localises to the cytoplasm. It catalyses the reaction UDP-N-acetyl-alpha-D-muramate + NADP(+) = UDP-N-acetyl-3-O-(1-carboxyvinyl)-alpha-D-glucosamine + NADPH + H(+). It functions in the pathway cell wall biogenesis; peptidoglycan biosynthesis. Cell wall formation. The sequence is that of UDP-N-acetylenolpyruvoylglucosamine reductase from Clostridium perfringens (strain ATCC 13124 / DSM 756 / JCM 1290 / NCIMB 6125 / NCTC 8237 / Type A).